We begin with the raw amino-acid sequence, 469 residues long: Uronate isomerase (469 aa).

The protein belongs to the metallo-dependent hydrolases superfamily. Uronate isomerase family.

The enzyme catalyses D-glucuronate = D-fructuronate. It catalyses the reaction aldehydo-D-galacturonate = keto-D-tagaturonate. It functions in the pathway carbohydrate metabolism; pentose and glucuronate interconversion. This is Uronate isomerase from Corynebacterium efficiens (strain DSM 44549 / YS-314 / AJ 12310 / JCM 11189 / NBRC 100395).